A 395-amino-acid polypeptide reads, in one-letter code: Elongation factor Tu (395 aa).

Residues 10 to 204 (KPHVNIGTIG…EVDAYIPTPE (195 aa)) form the tr-type G domain. Residues 19–26 (GHVDHGKT) are G1. A GTP-binding site is contributed by 19-26 (GHVDHGKT). Thr26 is a Mg(2+) binding site. The tract at residues 60-64 (GITIS) is G2. The interval 81-84 (DCPG) is G3. GTP is bound by residues 81–85 (DCPGH) and 136–139 (NKCD). A G4 region spans residues 136-139 (NKCD). The G5 stretch occupies residues 174–176 (SAL).

This sequence belongs to the TRAFAC class translation factor GTPase superfamily. Classic translation factor GTPase family. EF-Tu/EF-1A subfamily. In terms of assembly, monomer.

Its subcellular location is the cytoplasm. The catalysed reaction is GTP + H2O = GDP + phosphate + H(+). In terms of biological role, GTP hydrolase that promotes the GTP-dependent binding of aminoacyl-tRNA to the A-site of ribosomes during protein biosynthesis. In Bacillus cereus (strain ATCC 10987 / NRS 248), this protein is Elongation factor Tu.